The sequence spans 201 residues: Homeobox protein ceh-28 (201 aa).

Residues 72–84 show a composition bias toward polar residues; it reads SYYSSPSQNQRSY. The disordered stretch occupies residues 72–94; the sequence is SYYSSPSQNQRSYQNHRQHSNPD. Positions 104–163 form a DNA-binding region, homeobox; it reads KRKPRVLFTQHQVNELEERFKKQRYVTATEREELAQCLGLTATQVKIWFQNRRYKCKRLA.

Belongs to the NK-2 homeobox family.

The protein localises to the nucleus. In terms of biological role, probable transcription factor that regulates neuronal differention, including synapse assembly of the cholinergic motor neuron M4. Activates expression of growth factor, neuropeptide and transcription factor genes, such as TGF-beta dbl-1, FMRFamide-like flp-5 and transcription repressor zag-1, in the M4 neuron. Required for pharynx peristalsis. In Caenorhabditis elegans, this protein is Homeobox protein ceh-28.